Here is a 485-residue protein sequence, read N- to C-terminus: Hemolysin (485 aa).

Residues 1-28 (MKNFKGRKFLTCVLVSLCTLNYSSISFA) form the signal peptide. A run of 4 beta stranded transmembrane segments spans residues 196-209 (KAQIASALNVNAKY), 216-225 (IDFNAVANGE), 294-303 (SKDVQAAFKA), and 311-323 (ETSGQYKDIFEES). The Conserved undecapeptide signature appears at 465–475 (ECTGLAWEWWR).

It belongs to the cholesterol-dependent cytolysin family. In terms of assembly, homooligomeric pore complex of 35 to 50 subunits; when inserted in the host membrane.

The protein localises to the secreted. It localises to the host cell membrane. In terms of biological role, a cholesterol-dependent toxin with hemolytic activity against host red blood cells. Causes cytolysis by forming pores in cholesterol containing host membranes. binding to target membranes, the protein undergoes a major conformation change, leading to its insertion in the host membrane and formation of an oligomeric pore complex. Cholesterol is required for binding to host membranes, membrane insertion and pore formation; cholesterol binding is mediated by a Thr-Leu pair in the C-terminus. Can be reversibly inactivated by oxidation. This chain is Hemolysin, found in Bacillus cereus.